The following is a 530-amino-acid chain: Membrane-bound lytic murein transglycosylase F (530 aa).

A signal peptide spans 1 to 27 (MTPFAYKLPIRALWLGLLSLLLVGCQI). The tract at residues 28-279 (DSEPKSELEK…SLEEKYIGHI (252 aa)) is non-LT domain. The interval 280 to 530 (GAFDYVDTRA…SAKPSTESKN (251 aa)) is LT domain. The active site involves glutamate 324. Residues 505-530 (ALESESLENSESSAEPSAKPSTESKN) are disordered. Residues 513–530 (NSESSAEPSAKPSTESKN) are compositionally biased toward low complexity.

In the N-terminal section; belongs to the bacterial solute-binding protein 3 family. The protein in the C-terminal section; belongs to the transglycosylase Slt family.

The protein localises to the cell outer membrane. The catalysed reaction is Exolytic cleavage of the (1-&gt;4)-beta-glycosidic linkage between N-acetylmuramic acid (MurNAc) and N-acetylglucosamine (GlcNAc) residues in peptidoglycan, from either the reducing or the non-reducing ends of the peptidoglycan chains, with concomitant formation of a 1,6-anhydrobond in the MurNAc residue.. Functionally, murein-degrading enzyme that degrades murein glycan strands and insoluble, high-molecular weight murein sacculi, with the concomitant formation of a 1,6-anhydromuramoyl product. Lytic transglycosylases (LTs) play an integral role in the metabolism of the peptidoglycan (PG) sacculus. Their lytic action creates space within the PG sacculus to allow for its expansion as well as for the insertion of various structures such as secretion systems and flagella. The polypeptide is Membrane-bound lytic murein transglycosylase F (Vibrio cholerae serotype O1 (strain ATCC 39541 / Classical Ogawa 395 / O395)).